Reading from the N-terminus, the 331-residue chain is MKIKATIERIPGGMMLVPLVLGAILNTLAPNTGAYFGGFTKGMISGTVPILAVWFFCIGASINLRATGTVLRKSGTLVLTKIAVAWVVAMGCAMFIPENGIQTGFFAGLSVLAIVSAMDMTNGGLYASLMNQYGTKEESGAFVLMSLESGPLVTMLILGSAGLASFEPHHFVGAVLPFLIGFALGNLDTDLRDFFSKATPVLIPFFGFALGNTINLNVIMDTGLLGIVLGVAVIIITGIPLIIADRVIGGGNGTAGVAASSAAGAAVANPMIIAQINPSFEPVAASATALVAASVIVTAILVPIITALYAKRYGNIPKADVEPQPVESLHH.

10 helical membrane-spanning segments follow: residues Ile10 to Pro30, Gly42 to Ile62, Leu77 to Pro97, Gly100 to Met120, Ala141 to Ala161, Leu163 to Ala183, Pro200 to Met220, Leu224 to Ala244, Thr254 to Ala274, and Ala289 to Tyr309.

The protein belongs to the KdgT transporter family.

It localises to the cell inner membrane. The enzyme catalyses 2-dehydro-3-deoxy-D-gluconate(in) + H(+)(in) = 2-dehydro-3-deoxy-D-gluconate(out) + H(+)(out). In terms of biological role, catalyzes the proton-dependent uptake of 2-keto-3-deoxygluconate (KDG) into the cell. This is 2-keto-3-deoxygluconate permease from Enterobacter sp. (strain 638).